The chain runs to 255 residues: Aliphatic sulfonates import ATP-binding protein SsuB (255 aa).

The ABC transporter domain maps to 12–233; sequence LLLNAVSKHY…RLGSVRLAEL (222 aa). 44-51 is an ATP binding site; it reads GRSGGGKS.

It belongs to the ABC transporter superfamily. Aliphatic sulfonates importer (TC 3.A.1.17.2) family. In terms of assembly, the complex is composed of two ATP-binding proteins (SsuB), two transmembrane proteins (SsuC) and a solute-binding protein (SsuA).

The protein localises to the cell inner membrane. The enzyme catalyses ATP + H2O + aliphatic sulfonate-[sulfonate-binding protein]Side 1 = ADP + phosphate + aliphatic sulfonateSide 2 + [sulfonate-binding protein]Side 1.. Functionally, part of the ABC transporter complex SsuABC involved in aliphatic sulfonates import. Responsible for energy coupling to the transport system. The polypeptide is Aliphatic sulfonates import ATP-binding protein SsuB (Escherichia coli O6:K15:H31 (strain 536 / UPEC)).